A 272-amino-acid chain; its full sequence is Formamidopyrimidine-DNA glycosylase (272 aa).

Proline 2 acts as the Schiff-base intermediate with DNA in catalysis. Residue glutamate 3 is the Proton donor of the active site. Lysine 57 serves as the catalytic Proton donor; for beta-elimination activity. Residues histidine 90, arginine 109, and lysine 150 each contribute to the DNA site. The FPG-type zinc finger occupies 235–269 (HVYGRAKKKCLLCSSIIQEEKIGQRNTFWCGHCQP). The active-site Proton donor; for delta-elimination activity is the arginine 259.

The protein belongs to the FPG family. As to quaternary structure, monomer. It depends on Zn(2+) as a cofactor.

The catalysed reaction is Hydrolysis of DNA containing ring-opened 7-methylguanine residues, releasing 2,6-diamino-4-hydroxy-5-(N-methyl)formamidopyrimidine.. It catalyses the reaction 2'-deoxyribonucleotide-(2'-deoxyribose 5'-phosphate)-2'-deoxyribonucleotide-DNA = a 3'-end 2'-deoxyribonucleotide-(2,3-dehydro-2,3-deoxyribose 5'-phosphate)-DNA + a 5'-end 5'-phospho-2'-deoxyribonucleoside-DNA + H(+). Involved in base excision repair of DNA damaged by oxidation or by mutagenic agents. Acts as a DNA glycosylase that recognizes and removes damaged bases. Has a preference for oxidized purines, such as 7,8-dihydro-8-oxoguanine (8-oxoG). Has AP (apurinic/apyrimidinic) lyase activity and introduces nicks in the DNA strand. Cleaves the DNA backbone by beta-delta elimination to generate a single-strand break at the site of the removed base with both 3'- and 5'-phosphates. The protein is Formamidopyrimidine-DNA glycosylase of Aliivibrio fischeri (strain ATCC 700601 / ES114) (Vibrio fischeri).